We begin with the raw amino-acid sequence, 427 residues long: Inward rectifier potassium channel 2 (427 aa).

The Cytoplasmic segment spans residues 1 to 81 (MGSVRTNRYS…IFTTCVDIRW (81 aa)). At cysteine 76 the chain carries S-nitrosocysteine. A helical membrane pass occupies residues 82-106 (RWMLVIFCLAFVLSWLFFGCVFWLI). The Extracellular segment spans residues 107–128 (ALLHGDLDASKESKACVSEVNS). The segment at residues 129-140 (FTAAFLFSIETQ) is an intramembrane region (helical; Pore-forming). An intramembrane region (pore-forming) is located at residues 141 to 147 (TTIGYGF). The short motif at 142 to 147 (TIGYGF) is the Selectivity filter element. Over 148–156 (RCVTDECPV) the chain is Extracellular. Residues 157-178 (AVFMVVFQSIVGCIIDAFIIGA) traverse the membrane as a helical segment. At 179–427 (VMAKMAKPKK…PRPLRRESEI (249 aa)) the chain is on the cytoplasmic side. The segment at 181 to 208 (AKMAKPKKRNETLVFSHNAVIAMRDGKL) is polyphosphoinositide (PIP2)-binding. The interval 384–427 (SKEEDDSENGVPESTSTDTPPDIDLHNQASVPLEPRPLRRESEI) is disordered. The short motif at 425-427 (SEI) is the PDZ-binding element.

The protein belongs to the inward rectifier-type potassium channel (TC 1.A.2.1) family. KCNJ2 subfamily. In terms of assembly, homotetramer. Homomultimeric and heteromultimeric association with KCNJ4/Kir2.3. Can form heteromeric channels with Kir2.6/KCNJ18. Associates, via its PDZ-recognition domain, with a complex containing LIN7A, LIN7B, LIN7C, DLG1, CASK and APBA1. In terms of processing, S-nitrosylation increases the open probability and inward rectifying currents.

It localises to the cell membrane. The protein resides in the sarcolemma. The protein localises to the T-tubule. The enzyme catalyses K(+)(in) = K(+)(out). Its activity is regulated as follows. Activated by phosphatidylinositol 4,5 biphosphate (PtdIns(4,5)P2). Its function is as follows. Inward rectifier potassium channels are characterized by a greater tendency to allow potassium to flow into the cell rather than out of it. Their voltage dependence is regulated by the concentration of extracellular potassium; as external potassium is raised, the voltage range of the channel opening shifts to more positive voltages. The inward rectification is mainly due to the blockage of outward current by internal magnesium. Can be blocked by extracellular barium and cesium. Probably participates in establishing action potential waveform and excitability of neuronal and muscle tissues. This chain is Inward rectifier potassium channel 2 (KCNJ2), found in Bos taurus (Bovine).